Reading from the N-terminus, the 233-residue chain is Phosphoribosylformylglycinamidine synthase subunit PurQ (233 aa).

A Glutamine amidotransferase type-1 domain is found at 3-233 (SAVLVFPGIN…GLVEHLKTAA (231 aa)). Cys-87 serves as the catalytic Nucleophile. Active-site residues include His-204 and Glu-206.

As to quaternary structure, part of the FGAM synthase complex composed of 1 PurL, 1 PurQ and 2 PurS subunits.

It is found in the cytoplasm. It carries out the reaction N(2)-formyl-N(1)-(5-phospho-beta-D-ribosyl)glycinamide + L-glutamine + ATP + H2O = 2-formamido-N(1)-(5-O-phospho-beta-D-ribosyl)acetamidine + L-glutamate + ADP + phosphate + H(+). The catalysed reaction is L-glutamine + H2O = L-glutamate + NH4(+). Its pathway is purine metabolism; IMP biosynthesis via de novo pathway; 5-amino-1-(5-phospho-D-ribosyl)imidazole from N(2)-formyl-N(1)-(5-phospho-D-ribosyl)glycinamide: step 1/2. Part of the phosphoribosylformylglycinamidine synthase complex involved in the purines biosynthetic pathway. Catalyzes the ATP-dependent conversion of formylglycinamide ribonucleotide (FGAR) and glutamine to yield formylglycinamidine ribonucleotide (FGAM) and glutamate. The FGAM synthase complex is composed of three subunits. PurQ produces an ammonia molecule by converting glutamine to glutamate. PurL transfers the ammonia molecule to FGAR to form FGAM in an ATP-dependent manner. PurS interacts with PurQ and PurL and is thought to assist in the transfer of the ammonia molecule from PurQ to PurL. This chain is Phosphoribosylformylglycinamidine synthase subunit PurQ, found in Rhodopseudomonas palustris (strain HaA2).